Reading from the N-terminus, the 503-residue chain is Aromatase 2 (503 aa).

Position 437 (cysteine 437) interacts with heme.

This sequence belongs to the cytochrome P450 family. Requires heme as cofactor.

The protein localises to the membrane. It carries out the reaction testosterone + 3 reduced [NADPH--hemoprotein reductase] + 3 O2 = 17beta-estradiol + formate + 3 oxidized [NADPH--hemoprotein reductase] + 4 H2O + 4 H(+). The catalysed reaction is androst-4-ene-3,17-dione + 3 reduced [NADPH--hemoprotein reductase] + 3 O2 = estrone + formate + 3 oxidized [NADPH--hemoprotein reductase] + 4 H2O + 4 H(+). In terms of biological role, catalyzes the formation of aromatic C18 estrogens from C19 androgens. The chain is Aromatase 2 (CYP19A2) from Sus scrofa (Pig).